Consider the following 354-residue polypeptide: Peptide chain release factor 1 (354 aa).

The residue at position 230 (Gln230) is an N5-methylglutamine.

It belongs to the prokaryotic/mitochondrial release factor family. Methylated by PrmC. Methylation increases the termination efficiency of RF1.

It is found in the cytoplasm. Its function is as follows. Peptide chain release factor 1 directs the termination of translation in response to the peptide chain termination codons UAG and UAA. The chain is Peptide chain release factor 1 from Thermus thermophilus (strain ATCC BAA-163 / DSM 7039 / HB27).